A 466-amino-acid chain; its full sequence is MSRISISEIYKDDIIVNTPITIFGWVRSRRSSKSGFSFITVYDGSCLNSVQVVADKTLSNYYKDILHLTIGCSVTITGILILSIGDKQKYEIKATKFQVLGWIKNPDTYPISAKKHSLEYLREVAHLRSRTNLIGVIVRIRHHIFQSLHKFLNKQGYYWIPTPIITGLNTEGTGEMFRVSTMDMRNIPKKINGSVDFKKDFFGKESFLTVSGQLNLEAYACSLSKVYTFGPTFRAENSNTSRHLAEFWMLEIESSFCNLDEILIFSEDMLKYICKSLLKYCINDIKFLKNYIDNDIINRLKKFLSVNFIRINYKDAIDILLNSKKKFDNVVSFGVDLNAEHERFLVEKHFKAPVVIINYPKELKAFYMRLNDDKKTVAAMDLLVPGIGELIGGSQREERISVLDLRLSELGLRKEDYWWYRDLRRYGTVHHSGFGMGFERLISYITGISNIRDIIPFPRTVKNADF.

The protein belongs to the class-II aminoacyl-tRNA synthetase family. As to quaternary structure, homodimer.

Its subcellular location is the cytoplasm. It catalyses the reaction tRNA(Asn) + L-asparagine + ATP = L-asparaginyl-tRNA(Asn) + AMP + diphosphate + H(+). In Buchnera aphidicola subsp. Schizaphis graminum (strain Sg), this protein is Asparagine--tRNA ligase.